The chain runs to 432 residues: Leucine-rich repeat-containing protein ODA7 (432 aa).

5 LRR repeats span residues 47–68 (NLKA…PPLA), 69–90 (DLKC…EAVP), 91–112 (GLDT…ACCP), 113–134 (ALRT…AHLA), and 138–159 (ALQT…DILK). In terms of domain architecture, LRRCT spans 173–211 (PVVSNIKNYRKVLVTSIPSLTYLDDRPVFDNERKIAQAW). A coiled-coil region spans residues 212-243 (LEGGLEGERAMRNQLKEEEEERSRKNHEFMMQ). 2 disordered regions span residues 297-332 (RPGE…AAAE) and 368-432 (EELD…NDLD). Low complexity-rich tracts occupy residues 323-332 (GAWGSGAAAE) and 407-425 (VAAA…ISAA).

It belongs to the DNAAF1 family. As to quaternary structure, interacts with both outer row and I1 inner row dyneins.

The protein localises to the cytoplasm. Its subcellular location is the cytoskeleton. It is found in the cilium axoneme. In terms of biological role, cilium-specific protein required for cilia structures. Axonemal dynein-associated protein that participates in a structural link between inner and outer row dyneins. This Chlamydomonas reinhardtii (Chlamydomonas smithii) protein is Leucine-rich repeat-containing protein ODA7 (ODA7).